The sequence spans 143 residues: Submaxillary gland androgen-regulated protein 2, isoform delta (143 aa).

A signal peptide spans Met1 to Cys22. Disordered regions lie at residues Gly28 to Asn52 and Val116 to Phe143. Composition is skewed to polar residues over residues Leu36–Phe45 and Asn122–Phe143.

It localises to the secreted. Its function is as follows. May play a role in protection or detoxification. This Mus musculus (Mouse) protein is Submaxillary gland androgen-regulated protein 2, isoform delta (Smr2).